The following is a 263-amino-acid chain: L-histidine 2-aminobutanoyltransferase (263 aa).

The protein belongs to the methyltransferase superfamily. CntL family. Interacts with CntM.

It catalyses the reaction L-histidine + S-adenosyl-L-methionine = (2S)-2-amino-4-{[(1S)-1-carboxy-2-(1H-imidazol-4-yl)ethyl]amino}butanoate + S-methyl-5'-thioadenosine + H(+). In terms of biological role, catalyzes the nucleophilic attack of one alpha-aminobutanoate moiety from SAM onto L-histidine to produce the intermediate (2S)-2-amino-4-{[(1S)-1-carboxy-2-(1H-imidazol-4-yl)ethyl]amino}butanoate. Functions in the biosynthesis of the metallophore pseudopaline, which is involved in the acquisition of nickel and zinc, and thus enables bacterial growth inside the host, where metal access is limited. Therefore, this enzyme probably contributes to Pseudomonas virulence. Cannot use D-histidine in place of L-histidine as substrate. The polypeptide is L-histidine 2-aminobutanoyltransferase (Pseudomonas aeruginosa (strain UCBPP-PA14)).